Reading from the N-terminus, the 397-residue chain is Sulfate adenylyltransferase (397 aa).

It belongs to the sulfate adenylyltransferase family.

The enzyme catalyses sulfate + ATP + H(+) = adenosine 5'-phosphosulfate + diphosphate. It functions in the pathway sulfur metabolism; hydrogen sulfide biosynthesis; sulfite from sulfate: step 1/3. In Allochromatium vinosum (strain ATCC 17899 / DSM 180 / NBRC 103801 / NCIMB 10441 / D) (Chromatium vinosum), this protein is Sulfate adenylyltransferase (sat).